We begin with the raw amino-acid sequence, 306 residues long: 4-hydroxy-3-methylbut-2-enyl diphosphate reductase (306 aa).

Cysteine 12 provides a ligand contact to [4Fe-4S] cluster. (2E)-4-hydroxy-3-methylbut-2-enyl diphosphate-binding residues include histidine 41 and histidine 74. 2 residues coordinate dimethylallyl diphosphate: histidine 41 and histidine 74. The isopentenyl diphosphate site is built by histidine 41 and histidine 74. Residue cysteine 96 participates in [4Fe-4S] cluster binding. Position 124 (histidine 124) interacts with (2E)-4-hydroxy-3-methylbut-2-enyl diphosphate. Position 124 (histidine 124) interacts with dimethylallyl diphosphate. Histidine 124 is a binding site for isopentenyl diphosphate. Catalysis depends on glutamate 126, which acts as the Proton donor. Threonine 164 is a binding site for (2E)-4-hydroxy-3-methylbut-2-enyl diphosphate. Residue cysteine 194 participates in [4Fe-4S] cluster binding. Residues serine 222, serine 223, asparagine 224, and serine 266 each coordinate (2E)-4-hydroxy-3-methylbut-2-enyl diphosphate. Dimethylallyl diphosphate is bound by residues serine 222, serine 223, asparagine 224, and serine 266. 4 residues coordinate isopentenyl diphosphate: serine 222, serine 223, asparagine 224, and serine 266.

The protein belongs to the IspH family. The cofactor is [4Fe-4S] cluster.

The catalysed reaction is isopentenyl diphosphate + 2 oxidized [2Fe-2S]-[ferredoxin] + H2O = (2E)-4-hydroxy-3-methylbut-2-enyl diphosphate + 2 reduced [2Fe-2S]-[ferredoxin] + 2 H(+). The enzyme catalyses dimethylallyl diphosphate + 2 oxidized [2Fe-2S]-[ferredoxin] + H2O = (2E)-4-hydroxy-3-methylbut-2-enyl diphosphate + 2 reduced [2Fe-2S]-[ferredoxin] + 2 H(+). Its pathway is isoprenoid biosynthesis; dimethylallyl diphosphate biosynthesis; dimethylallyl diphosphate from (2E)-4-hydroxy-3-methylbutenyl diphosphate: step 1/1. The protein operates within isoprenoid biosynthesis; isopentenyl diphosphate biosynthesis via DXP pathway; isopentenyl diphosphate from 1-deoxy-D-xylulose 5-phosphate: step 6/6. Functionally, catalyzes the conversion of 1-hydroxy-2-methyl-2-(E)-butenyl 4-diphosphate (HMBPP) into a mixture of isopentenyl diphosphate (IPP) and dimethylallyl diphosphate (DMAPP). Acts in the terminal step of the DOXP/MEP pathway for isoprenoid precursor biosynthesis. The polypeptide is 4-hydroxy-3-methylbut-2-enyl diphosphate reductase (Dechloromonas aromatica (strain RCB)).